A 142-amino-acid chain; its full sequence is Large ribosomal subunit protein uL11 (142 aa).

It belongs to the universal ribosomal protein uL11 family. Part of the ribosomal stalk of the 50S ribosomal subunit. Interacts with L10 and the large rRNA to form the base of the stalk. L10 forms an elongated spine to which L12 dimers bind in a sequential fashion forming a multimeric L10(L12)X complex. In terms of processing, one or more lysine residues are methylated.

In terms of biological role, forms part of the ribosomal stalk which helps the ribosome interact with GTP-bound translation factors. The protein is Large ribosomal subunit protein uL11 of Shewanella amazonensis (strain ATCC BAA-1098 / SB2B).